A 282-amino-acid polypeptide reads, in one-letter code: Putative hydrolase Bcenmc03_4750 (282 aa).

Mg(2+) is bound by residues Glu-124, Glu-126, and Asp-155.

It belongs to the FAH family. Mg(2+) serves as cofactor.

The polypeptide is Putative hydrolase Bcenmc03_4750 (Burkholderia orbicola (strain MC0-3)).